Consider the following 162-residue polypeptide: MKLNEIRDNEGATKDRMRVGRGIGSGKGKTAGRGVKGQKARTGVAIKGFEGGQMPLHRRLPKRGFNNPGATDLNEVNVGRIQQAVDSGKLDPSAPVTVEALVAAGVVSRVRDGVKILGVGELTASLTFQVARASKSAVAAIEKAGGSVTQSLAATDGAVASA.

The segment covering 1–18 (MKLNEIRDNEGATKDRMR) has biased composition (basic and acidic residues). The segment at 1 to 42 (MKLNEIRDNEGATKDRMRVGRGIGSGKGKTAGRGVKGQKART) is disordered. Residues 21 to 35 (RGIGSGKGKTAGRGV) are compositionally biased toward gly residues.

This sequence belongs to the universal ribosomal protein uL15 family. Part of the 50S ribosomal subunit.

Its function is as follows. Binds to the 23S rRNA. The polypeptide is Large ribosomal subunit protein uL15 (Methylobacterium sp. (strain 4-46)).